The following is a 464-amino-acid chain: tRNA modification GTPase MnmE (464 aa).

Residues R23, E84, and R123 each contribute to the (6S)-5-formyl-5,6,7,8-tetrahydrofolate site. Residues 216–386 form the TrmE-type G domain; the sequence is GARATLVGRP…LGATVARLLL (171 aa). N226 provides a ligand contact to K(+). GTP is bound by residues 226–231, 245–251, and 270–273; these read NAGKSS, TPIPGTT, and DTAG. Residue S230 participates in Mg(2+) binding. The K(+) site is built by T245, I247, and T250. T251 lines the Mg(2+) pocket. Residue K464 coordinates (6S)-5-formyl-5,6,7,8-tetrahydrofolate.

It belongs to the TRAFAC class TrmE-Era-EngA-EngB-Septin-like GTPase superfamily. TrmE GTPase family. As to quaternary structure, homodimer. Heterotetramer of two MnmE and two MnmG subunits. It depends on K(+) as a cofactor.

Its subcellular location is the cytoplasm. Its function is as follows. Exhibits a very high intrinsic GTPase hydrolysis rate. Involved in the addition of a carboxymethylaminomethyl (cmnm) group at the wobble position (U34) of certain tRNAs, forming tRNA-cmnm(5)s(2)U34. This chain is tRNA modification GTPase MnmE, found in Roseiflexus castenholzii (strain DSM 13941 / HLO8).